The following is a 364-amino-acid chain: Dimethylsulfoniopropionate demethylase DmdA (364 aa).

The protein belongs to the GcvT family. DmdA subfamily.

The catalysed reaction is S,S-dimethyl-beta-propiothetin + (6S)-5,6,7,8-tetrahydrofolate = 3-(methylsulfanyl)propanoate + (6S)-5-methyl-5,6,7,8-tetrahydrofolate + H(+). Its function is as follows. Involved in the assimilation of dimethylsulphoniopropionate (DMSP), an important compound in the fixation of carbon in marine phytoplankton, by mediating demethylation of dimethylsulfoniopropionate (DMSP) to methyl-mercaptopropionate (MMPA). The intracellular concentration of DMSP is estimated to be 70 mM. The polypeptide is Dimethylsulfoniopropionate demethylase DmdA (Ruegeria pomeroyi (strain ATCC 700808 / DSM 15171 / DSS-3) (Silicibacter pomeroyi)).